Here is a 306-residue protein sequence, read N- to C-terminus: Homoserine kinase (306 aa).

91-101 (PLARGLGSSAA) serves as a coordination point for ATP.

It belongs to the GHMP kinase family. Homoserine kinase subfamily.

It localises to the cytoplasm. The enzyme catalyses L-homoserine + ATP = O-phospho-L-homoserine + ADP + H(+). Its pathway is amino-acid biosynthesis; L-threonine biosynthesis; L-threonine from L-aspartate: step 4/5. Functionally, catalyzes the ATP-dependent phosphorylation of L-homoserine to L-homoserine phosphate. This is Homoserine kinase from Bacillus licheniformis (strain ATCC 14580 / DSM 13 / JCM 2505 / CCUG 7422 / NBRC 12200 / NCIMB 9375 / NCTC 10341 / NRRL NRS-1264 / Gibson 46).